The following is a 355-amino-acid chain: GTPase Obg (355 aa).

One can recognise an Obg domain in the interval 1 to 159 (MKLVDEAEIL…RLLKLELKLL (159 aa)). In terms of domain architecture, OBG-type G spans 160-342 (ADVGLLGFPN…IMKDVMAFFD (183 aa)). GTP-binding positions include 166 to 173 (GFPNAGKS), 191 to 195 (FTTLY), 213 to 216 (DVPG), 292 to 295 (NKAD), and 323 to 325 (SAL). Residues Ser173 and Thr193 each contribute to the Mg(2+) site.

It belongs to the TRAFAC class OBG-HflX-like GTPase superfamily. OBG GTPase family. As to quaternary structure, monomer. It depends on Mg(2+) as a cofactor.

The protein localises to the cytoplasm. Functionally, an essential GTPase which binds GTP, GDP and possibly (p)ppGpp with moderate affinity, with high nucleotide exchange rates and a fairly low GTP hydrolysis rate. Plays a role in control of the cell cycle, stress response, ribosome biogenesis and in those bacteria that undergo differentiation, in morphogenesis control. The sequence is that of GTPase Obg from Xanthomonas axonopodis pv. citri (strain 306).